The sequence spans 529 residues: Basal body-orientation factor 1 (529 aa).

The span at 1 to 13 shows a compositional bias: basic residues; sequence MPSKGKDKKKGKS. Positions 1-22 are disordered; that stretch reads MPSKGKDKKKGKSKGKDTKKLI. 2 coiled-coil regions span residues 85-201 and 271-361; these read LKKQ…EAEK and VKEK…EVER.

This sequence belongs to the BBOF1 family. Interacts with MNS1 and ODF2.

It is found in the cytoplasm. The protein resides in the cytoskeleton. It localises to the cilium basal body. The protein localises to the flagellum axoneme. Functionally, plays an essential role in sperm motility and male fertility by stabilizing the sperm flagellar axonemal structure. May be required for the stability of ODF2 and MANS1 proteins. Dispensable for the assembly and function of motile cilia. The polypeptide is Basal body-orientation factor 1 (Homo sapiens (Human)).